The sequence spans 384 residues: Guanine nucleotide-binding protein alpha-1 subunit (384 aa).

The segment at 1 to 22 is disordered; sequence MGSLCSRNKHYSQADDEENTQT. Residue Gly2 is the site of N-myristoyl glycine attachment. The S-palmitoyl cysteine moiety is linked to residue Cys5. The G-alpha domain occupies 38 to 384; the sequence is HIQKLLLLGA…RRNLFEAGLL (347 aa). The interval 41–54 is G1 motif; sequence KLLLLGAGDSGKST. The GTP site is built by Asp49, Ser50, Gly51, Lys52, Ser53, Thr54, Asp163, Leu188, Thr194, Gly222, Asn288, Lys289, Asp291, and Ala356. Residue Ser53 coordinates Mg(2+). Residues 186 to 194 form a G2 motif region; the sequence is DVLFARIRT. Thr194 contributes to the Mg(2+) binding site. The G3 motif stretch occupies residues 215–224; sequence YRLFDVGGQR. The tract at residues 284–291 is G4 motif; it reads MLFLNKFD. Positions 354 to 359 are G5 motif; it reads TTALDQ.

This sequence belongs to the G-alpha family. As to quaternary structure, g proteins are composed of 3 units; alpha, beta and gamma. The alpha chain contains the guanine nucleotide binding site. Requires Mg(2+) as cofactor.

In terms of biological role, guanine nucleotide-binding proteins (G proteins) are involved as modulators or transducers in various transmembrane signaling systems. The polypeptide is Guanine nucleotide-binding protein alpha-1 subunit (GPA1) (Solanum lycopersicum (Tomato)).